Consider the following 1806-residue polypeptide: Collagen alpha-1(XI) chain (1806 aa).

A signal peptide spans M1 to G35. Residues A36–A511 constitute a propeptide, N-terminal propeptide. 2 cysteine pairs are disulfide-bonded: C61/C243 and C182/C236. The region spanning D71 to C243 is the Laminin G-like domain. Residues K230 to H419 form a nonhelical region region. Residues G420 to T508 form a triple-helical region (interrupted) region. The disordered stretch occupies residues L439–T508. In terms of domain architecture, Collagen-like 1 spans G442 to G490. 2 stretches are compositionally biased toward low complexity: residues P449–P461 and L479–P496. The short nonhelical segment stretch occupies residues I509–A511. Residues Q512–R528 are telopeptide. The interval R528–A1563 is disordered. A triple-helical region region spans residues G529–V1542. 4 Collagen-like domains span residues G532–G586, G583–P641, G616–P674, and G643–Q699. Composition is skewed to gly residues over residues G541–G550 and G583–G592. K612 is subject to Allysine. Positions P641–A662 are enriched in low complexity. Over residues Q699–P710 the composition is skewed to pro residues. A compositionally biased stretch (low complexity) spans Q717–A728. Positions R807–K816 are enriched in basic and acidic residues. Low complexity-rich tracts occupy residues K875–K903, R918–V927, K941–T960, P971–I981, R1032–P1041, and S1058–P1074. Residues R1076–P1085 show a composition bias toward pro residues. The segment covering A1086 to V1110 has biased composition (low complexity). The span at G1162–G1171 shows a compositional bias: gly residues. Composition is skewed to pro residues over residues M1218–P1229 and Q1343–R1362. 2 stretches are compositionally biased toward low complexity: residues A1385–P1394 and Q1419–D1428. Collagen-like domains are found at residues G1393 to G1450, G1429 to D1487, and G1483 to E1541. The span at P1430–L1439 shows a compositional bias: pro residues. The residue at position 1452 (K1452) is an Allysine. Residues P1455–P1464 show a composition bias toward low complexity. Gly residues predominate over residues G1483–G1492. Composition is skewed to pro residues over residues P1493–Q1509 and P1530–P1539. Residues I1543–A1563 form a nonhelical region (C-terminal) region. Positions D1564–G1806 are cleaved as a propeptide — C-terminal propeptide. Residues E1577–L1805 form the Fibrillar collagen NC1 domain. C1607 and C1639 are joined by a disulfide. Ca(2+)-binding residues include D1625, N1627, Q1628, C1630, and D1633. Residue N1640 is glycosylated (N-linked (GlcNAc...) asparagine). Cystine bridges form between C1648-C1803 and C1714-C1757.

This sequence belongs to the fibrillar collagen family. As to quaternary structure, trimers composed of three different chains: alpha 1(XI), alpha 2(XI), and alpha 3(XI). Alpha 3(XI) is a post-translational modification of alpha 1(II). Alpha 1(V) can also be found instead of alpha 3(XI)=1(II). In terms of processing, prolines at the third position of the tripeptide repeating unit (G-X-Y) are hydroxylated in some or all of the chains. Post-translationally, N-glycosylated. Cartilage, placenta and some tumor or virally transformed cell lines. Isoforms using exon IIA or IIB are found in the cartilage while isoforms using only exon IIB are found in the tendon.

It localises to the secreted. Its subcellular location is the extracellular space. The protein resides in the extracellular matrix. Functionally, may play an important role in fibrillogenesis by controlling lateral growth of collagen II fibrils. The sequence is that of Collagen alpha-1(XI) chain (COL11A1) from Homo sapiens (Human).